Reading from the N-terminus, the 113-residue chain is MEARAVAKYIRISPRKARQVIDLIRGKDVEEALAILRYTPKKASYFIEKVLRSAIANAENNHDMSKENLYVAKAYVDQGPTLKRYNPRAQGRVDLWRVRTSHITIVVAERKEG.

This sequence belongs to the universal ribosomal protein uL22 family. In terms of assembly, part of the 50S ribosomal subunit.

This protein binds specifically to 23S rRNA; its binding is stimulated by other ribosomal proteins, e.g. L4, L17, and L20. It is important during the early stages of 50S assembly. It makes multiple contacts with different domains of the 23S rRNA in the assembled 50S subunit and ribosome. Functionally, the globular domain of the protein is located near the polypeptide exit tunnel on the outside of the subunit, while an extended beta-hairpin is found that lines the wall of the exit tunnel in the center of the 70S ribosome. In Carboxydothermus hydrogenoformans (strain ATCC BAA-161 / DSM 6008 / Z-2901), this protein is Large ribosomal subunit protein uL22.